Reading from the N-terminus, the 362-residue chain is MEKDSKVIEKEGNKGFTKSIISTVKNIKLGYGMDIYQMSTPASLIAPYSSLTYISDSFSKNFEILIKANSIENDLDRLLEIFKYITTIFIINNNACGKPIVPIVGETQRFKFSNKDEDGNEFNDSFHCAEHVQNSPFPLSVSSTVNEKEGIELCYNYAAKILFMATYFRINIDEAETFIKFNKFNETYNIILPTLYTRIFRGFSEYSGKLKIEPTKSNYYIDANFQSKPLIGGKYNYFEAYVSKKDTDEKIYKIFGQWDKEQQILDFENYQTDFFFKRPQQFYEKQLPNEILPTDSSVVWKGLIDAHNCGNNKLKLKEKTKVDEDQKLIENQRKKENINFKPKFFIKNKETDKWELDKFNKY.

This sequence belongs to the OSBP family.

This is Oxysterol-binding protein 5 (osbE) from Dictyostelium discoideum (Social amoeba).